Reading from the N-terminus, the 89-residue chain is Large ribosomal subunit protein bL28 (89 aa).

This sequence belongs to the bacterial ribosomal protein bL28 family.

The polypeptide is Large ribosomal subunit protein bL28 (Chlamydia trachomatis serovar L2 (strain ATCC VR-902B / DSM 19102 / 434/Bu)).